A 181-amino-acid polypeptide reads, in one-letter code: Interleukin-10 (181 aa).

The first 19 residues, 1 to 19 (MHGSALLCCCLVLLAGVGA), serve as a signal peptide directing secretion. 2 disulfide bridges follow: cysteine 31-cysteine 129 and cysteine 81-cysteine 135. Residue asparagine 137 is glycosylated (N-linked (GlcNAc...) asparagine).

This sequence belongs to the IL-10 family. As to quaternary structure, homodimer. Interacts with IL10RA and IL10RB.

The protein resides in the secreted. Functionally, major immune regulatory cytokine that acts on many cells of the immune system where it has profound anti-inflammatory functions, limiting excessive tissue disruption caused by inflammation. Mechanistically, IL10 binds to its heterotetrameric receptor comprising IL10RA and IL10RB leading to JAK1 and STAT2-mediated phosphorylation of STAT3. In turn, STAT3 translocates to the nucleus where it drives expression of anti-inflammatory mediators. Targets antigen-presenting cells (APCs) such as macrophages and monocytes and inhibits their release of pro-inflammatory cytokines including granulocyte-macrophage colony-stimulating factor /GM-CSF, granulocyte colony-stimulating factor/G-CSF, IL-1 alpha, IL-1 beta, IL-6, IL-8 and TNF-alpha. Also interferes with antigen presentation by reducing the expression of MHC-class II and co-stimulatory molecules, thereby inhibiting their ability to induce T cell activation. In addition, controls the inflammatory response of macrophages by reprogramming essential metabolic pathways including mTOR signaling. In Canis lupus familiaris (Dog), this protein is Interleukin-10 (IL10).